We begin with the raw amino-acid sequence, 843 residues long: MAEKSSFFVHFSCLLLLLTIIITCGEGVRNPVRPRSSERRALMDGQDLSRPLKLTFGGPSRNWTDAIPIGNGRLGATIWGGVSSEILNINEDTIWTGVPADYTNQKAPEALAEVRRLVDERNYAEATSEAVKLSGQPSDVYQIVGDLNLEFDSSHRKYTQASYRRELDLETAVAKVSYSVGAVDFSREFFASNPDQVIIAKIYASKPGSLSFKVSFDSELHHHSETNPKANQILMRGSCRPKRLPVNLKKSINATNIPYDDHKGLQFASILEVRVSNGGSVSSLGGKKLSVEKADWAVLLLAASSNFDGPFTMPVDSKIDPAKECVNRISSVQKYSYSDLYARHLGDYQKLFNRVSLHLSGSSTNETVQQATSTAERVRSFKTDQDPSLVELLFQYGRYLLISSSRPGTQVANLQGIWNRDIQPPWDGAPHLNINLQMNYWHSLPGNIRECQEPLFDYMSALAINGRKTAQVNYGASGWVAHQVSDIWAKTSPDRGEAVWALWPMGGAWLCTHAWEHYTYTMDKEFLKKKGYPLLEGCTSFLLDWLIKGKDGFLQTNPSTSPEHMFTAPIGKPASVSYSSTMDIAIIKEVFADIVSASEILGKTNDTLIGKVIAAQAKLPPTRISKDGSIREWAEDFEDPEVHHRHVSHLFGLFPGHTITVEKSPELAKAVEATLKKRGEEGPGWSTTWKAALWARLHNSEHAYRMVTHIFDLVDPLNERNYEGGLYSNMFTAHPPFQIDANFGFAAAVAEMLVQSTTKDLYLLPALPADKWPNGIVNGLRARGGVTVSIKWMEGNLVEFGLWSEQIVSTRIVYRGISAAAELLPGKVFTFDKDLRCIRTDKL.

The N-terminal stretch at 1–27 is a signal peptide; it reads MAEKSSFFVHFSCLLLLLTIIITCGEG. Asn-62, Asn-253, Asn-365, and Asn-605 each carry an N-linked (GlcNAc...) asparagine glycan.

This sequence belongs to the glycosyl hydrolase 95 family. Ubiquitous. Highest expression in vascular tissues, leaf trichomes, root elongation zone and emerging lateral roots.

It localises to the secreted. It is found in the extracellular space. The protein localises to the apoplast. The enzyme catalyses an alpha-L-fucoside + H2O = L-fucose + an alcohol. In terms of biological role, hydrolyzes alpha-1,2-linked fucose. Also active on fucosylated xyloglucan oligosaccharides. No activity with 3-fucosyllactose, p-nitrophenyl-alpha-I-fucopyranoside, lacto-N-fucopentaose II, lacto-N-fucopentaose III or alpha 1,6-fucosylated chitopentaose. Involved in apoplastic xyloglucan metabolism. This chain is Alpha-L-fucosidase 2 (FUC95A), found in Arabidopsis thaliana (Mouse-ear cress).